Reading from the N-terminus, the 214-residue chain is Charged multivesicular body protein 2b-B (214 aa).

Residues 25–55 (QRAITRDRAALEKQEKQLEMEIKKMAKTGNK) are a coiled coil. The tract at residues 178-200 (MAKAPSAAKGLPSTSAAKSKGIS) is disordered. The MIT-interacting motif motif lies at 202–212 (EEIERQLKALG).

This sequence belongs to the SNF7 family. Probable core component of the endosomal sorting required for transport complex III (ESCRT-III). ESCRT-III components are thought to multimerize to form a flat lattice on the perimeter membrane of the endosome.

Its subcellular location is the cytoplasm. It localises to the cytosol. The protein resides in the late endosome membrane. Probable core component of the endosomal sorting required for transport complex III (ESCRT-III) which is involved in multivesicular bodies (MVBs) formation and sorting of endosomal cargo proteins into MVBs. MVBs contain intraluminal vesicles (ILVs) that are generated by invagination and scission from the limiting membrane of the endosome and mostly are delivered to lysosomes enabling degradation of membrane proteins, such as stimulated growth factor receptors, lysosomal enzymes and lipids. In Xenopus laevis (African clawed frog), this protein is Charged multivesicular body protein 2b-B (chmp2b-b).